The following is a 188-amino-acid chain: MAKINGNEIRPGYVIEHDGGLWVAVRTNTVKPGKGGAYNQVELKNLINGTKLNERFRSAETVEQIRLDLKDFSFLYEQDDALVFMDTQSYEQLELNKDFVGDRAAFLQDGMMVTVQLYEERPIGISLPDQVTLTITEADPVVKGQTAAASYKPAVLKNGIRVLVPPFIGAGERIIVDTNEITYVRRAD.

It belongs to the elongation factor P family.

Its subcellular location is the cytoplasm. Its pathway is protein biosynthesis; polypeptide chain elongation. Functionally, involved in peptide bond synthesis. Stimulates efficient translation and peptide-bond synthesis on native or reconstituted 70S ribosomes in vitro. Probably functions indirectly by altering the affinity of the ribosome for aminoacyl-tRNA, thus increasing their reactivity as acceptors for peptidyl transferase. This Mesorhizobium japonicum (strain LMG 29417 / CECT 9101 / MAFF 303099) (Mesorhizobium loti (strain MAFF 303099)) protein is Elongation factor P 1.